We begin with the raw amino-acid sequence, 326 residues long: mRNA decay activator protein ZFP36 (326 aa).

A necessary for nuclear export region spans residues 1–15 (MDLTAIYESLLSLSP). The interval 1 to 100 (MDLTAIYESL…PTSPTATSTT (100 aa)) is necessary and sufficient for the association with mRNA decay enzymes and mRNA decay activation. 2 necessary for localization of ARE-containing mRNAs to processing bodies (PBs) regions span residues 1–174 (MDLT…DLAA) and 100–326 (TPSR…SVSE). The disordered stretch occupies residues 13–66 (LSPDVPVPSDHGGTESSPGWGSSGPWSLSPSDSSPSGVTSRLPGRSTSLVEGRS). Residues 28–49 (SSPGWGSSGPWSLSPSDSSPSG) are compositionally biased toward low complexity. At S60 the chain carries Phosphoserine; by MAPKAPK2. The residue at position 66 (S66) is a Phosphoserine. A P-P-P-P-G repeat occupies 71-75 (PPPPG). The disordered stretch occupies residues 78–102 (PLAPRLGPELSPSPTSPTATSTTPS). 2 positions are modified to phosphoserine: S88 and S90. Residue T92 is modified to Phosphothreonine. S93 is modified (phosphoserine). Residues 95-168 (TATSTTPSRY…GSRCHFIHNP (74 aa)) form a necessary for nuclear localization region. The necessary for RNA-binding stretch occupies residues 97 to 173 (TSTTPSRYKT…FIHNPSEDLA (77 aa)). C3H1-type zinc fingers lie at residues 103–131 (RYKT…HGLG) and 141–169 (KYKT…HNPS). Residues 103–194 (RYKTELCRTF…ISFSGLPSGR (92 aa)) form a necessary for interaction with PABPN1 region. Position 169 is a phosphoserine (S169). Residues 174 to 326 (APGHPPVLRQ…PIFNRISVSE (153 aa)) are necessary for mRNA decay activation. Disordered stretches follow at residues 175 to 245 (PGHP…RRDP) and 273 to 292 (SVQS…SSLG). The residue at position 186 (S186) is a Phosphoserine; by MAPKAPK2. S197 bears the Phosphoserine mark. One copy of the P-P-P-P-G repeat lies at 198-202 (PPPPG). The segment covering 204–216 (AGPSLSSSSFSPS) has biased composition (low complexity). S218 is subject to Phosphoserine. One copy of the P-P-P-P-G repeat lies at 219–223 (PPPPG). S228 carries the phosphoserine; by MAPK1; in vitro modification. A phosphoserine mark is found at S276, S296, and S323. The tract at residues 312 to 326 (APRRLPIFNRISVSE) is interaction with CNOT1.

As to quaternary structure, associates with cytoplasmic CCR4-NOT and PAN2-PAN3 deadenylase complexes to trigger ARE-containing mRNA deadenylation and decay processes. Part of a mRNA decay activation complex at least composed of poly(A)-specific exoribonucleases CNOT6, EXOSC2 and XRN1 and mRNA-decapping enzymes DCP1A and DCP2. Associates with the RNA exosome complex. Interacts (via phosphorylated form) with 14-3-3 proteins; these interactions promote exclusion of ZFP36 from cytoplasmic stress granules in response to arsenite treatment in a MAPKAPK2-dependent manner and does not prevent CCR4-NOT deadenylase complex recruitment or ZFP36-induced ARE-containing mRNA deadenylation and decay processes. Interacts with 14-3-3 proteins; these interactions occur in response to rapamycin in an Akt-dependent manner. Interacts with AGO2 and AGO4. Interacts (via C-terminus) with CNOT1; this interaction occurs in a RNA-independent manner and induces mRNA deadenylation. Interacts (via N-terminus) with CNOT6. Interacts with CNOT6L. Interacts (via C-terminus) with CNOT7; this interaction occurs in a RNA-independent manner, induces mRNA deadenylation and is inhibited in a phosphorylation MAPKAPK2-dependent manner. Interacts (via unphosphorylated form) with CNOT8; this interaction occurs in a RNA-independent manner and is inhibited in a phosphorylation MAPKAPK2-dependent manner. Interacts with DCP1A. Interacts (via N-terminus) with DCP2. Interacts with EDC3. Interacts (via N-terminus) with EXOSC2. Interacts with heat shock 70 kDa proteins. Interacts with KHSRP; this interaction increases upon cytokine-induced treatment. Interacts with MAP3K4; this interaction enhances the association with SH3KBP1/CIN85. Interacts with MAPKAPK2; this interaction occurs upon skeletal muscle satellite cell activation. Interacts with NCL. Interacts with NUP214; this interaction increases upon lipopolysaccharide (LPS) stimulation. Interacts with PABPC1; this interaction occurs in a RNA-dependent manner. Interacts (via hypophosphorylated form) with PABPN1 (via RRM domain and C-terminal arginine-rich region); this interaction occurs in the nucleus in a RNA-independent manner, decreases in presence of single-stranded poly(A) RNA-oligomer and in a p38 MAPK-dependent-manner and inhibits nuclear poly(A) tail synthesis. Interacts with PAN2. Interacts (via C3H1-type zinc finger domains) with PKM. Interacts (via C3H1-type zinc finger domains) with nuclear RNA poly(A) polymerase. Interacts with PPP2CA; this interaction occurs in LPS-stimulated cells and induces ZFP36 dephosphorylation, and hence may promote ARE-containing mRNAs decay. Interacts (via C-terminus) with PRR5L (via C-terminus); this interaction may accelerate ZFP36-mediated mRNA decay during stress. Interacts (via C-terminus) with SFN; this interaction occurs in a phosphorylation-dependent manner. Interacts (via extreme C-terminal region) with SH3KBP1/CIN85 (via SH3 domains); this interaction enhances MAP3K4-induced phosphorylation of ZFP36 at Ser-66 and Ser-93 and does not alter neither ZFP36 binding to ARE-containing transcripts nor TNF-alpha mRNA decay. Interacts with XRN1. Interacts (via C-terminus and Ser-186 phosphorylated form) with YWHAB; this interaction occurs in a p38/MAPKAPK2-dependent manner, increases cytoplasmic localization of ZFP36 and protects ZFP36 from Ser-186 dephosphorylation by serine/threonine phosphatase 2A, and hence may be crucial for stabilizing ARE-containing mRNAs. Interacts (via phosphorylated form) with YWHAE. Interacts (via C-terminus) with YWHAG; this interaction occurs in a phosphorylation-dependent manner. Interacts with YWHAH; this interaction occurs in a phosphorylation-dependent manner. Interacts with YWHAQ; this interaction occurs in a phosphorylation-dependent manner. Interacts with (via C-terminus) YWHAZ; this interaction occurs in a phosphorylation-dependent manner. Interacts (via P-P-P-P-G repeats) with GIGYF2; the interaction is direct. (Microbial infection) Interacts (via C-terminus) with HTLV-1 TAX (via C-terminus); this interaction inhibits HTLV-1 TAX to transactivate viral long terminal repeat (LTR) promoter. Phosphorylated. Phosphorylation at serine and/or threonine residues occurs in a p38 MAPK- and MAPKAPK2-dependent manner. Phosphorylated by MAPKAPK2 at Ser-60 and Ser-186; phosphorylation increases its stability and cytoplasmic localization, promotes binding to 14-3-3 adapter proteins and inhibits the recruitment of cytoplasmic CCR4-NOT and PAN2-PAN3 deadenylase complexes to the mRNA decay machinery, thereby inhibiting ZFP36-induced ARE-containing mRNA deadenylation and decay processes. Phosphorylation by MAPKAPK2 does not impair ARE-containing RNA-binding. Phosphorylated in a MAPKAPK2- and p38 MAPK-dependent manner upon skeletal muscle satellite cell activation; this phosphorylation inhibits ZFP36-mediated mRNA decay activity, and hence stabilizes MYOD1 mRNA. Phosphorylated by MAPK1 upon mitogen stimulation. Phosphorylated at Ser-66 and Ser-93; these phosphorylations increase in a SH3KBP1-dependent manner. Phosphorylated at serine and threonine residues in a pyruvate kinase PKM- and p38 MAPK-dependent manner. Phosphorylation at Ser-60 may participate in the PKM-mediated degradation of ZFP36 in a p38 MAPK-dependent manner. Dephosphorylated by serine/threonine phosphatase 2A at Ser-186. In terms of processing, ubiquitinated; pyruvate kinase (PKM)-dependent ubiquitination leads to proteasomal degradation through a p38 MAPK signaling pathway. Expressed in both basal and suprabasal epidermal layers. Expressed in epidermal keratinocytes. Expressed strongly in mature dendritic cells. Expressed in immature dendritic cells (at protein level).

It is found in the nucleus. Its subcellular location is the cytoplasm. The protein resides in the cytoplasmic granule. The protein localises to the P-body. In terms of biological role, zinc-finger RNA-binding protein that destabilizes several cytoplasmic AU-rich element (ARE)-containing mRNA transcripts by promoting their poly(A) tail removal or deadenylation, and hence provide a mechanism for attenuating protein synthesis. Acts as an 3'-untranslated region (UTR) ARE mRNA-binding adapter protein to communicate signaling events to the mRNA decay machinery. Recruits deadenylase CNOT7 (and probably the CCR4-NOT complex) via association with CNOT1, and hence promotes ARE-mediated mRNA deadenylation. Functions also by recruiting components of the cytoplasmic RNA decay machinery to the bound ARE-containing mRNAs. Self regulates by destabilizing its own mRNA. Binds to 3'-UTR ARE of numerous mRNAs and of its own mRNA. Plays a role in anti-inflammatory responses; suppresses tumor necrosis factor (TNF)-alpha production by stimulating ARE-mediated TNF-alpha mRNA decay and several other inflammatory ARE-containing mRNAs in interferon (IFN)- and/or lipopolysaccharide (LPS)-induced macrophages. Also plays a role in the regulation of dendritic cell maturation at the post-transcriptional level, and hence operates as part of a negative feedback loop to limit the inflammatory response. Promotes ARE-mediated mRNA decay of hypoxia-inducible factor HIF1A mRNA during the response of endothelial cells to hypoxia. Positively regulates early adipogenesis of preadipocytes by promoting ARE-mediated mRNA decay of immediate early genes (IEGs). Negatively regulates hematopoietic/erythroid cell differentiation by promoting ARE-mediated mRNA decay of the transcription factor STAT5B mRNA. Plays a role in maintaining skeletal muscle satellite cell quiescence by promoting ARE-mediated mRNA decay of the myogenic determination factor MYOD1 mRNA. Associates also with and regulates the expression of non-ARE-containing target mRNAs at the post-transcriptional level, such as MHC class I mRNAs. Participates in association with argonaute RISC catalytic components in the ARE-mediated mRNA decay mechanism; assists microRNA (miRNA) targeting ARE-containing mRNAs. May also play a role in the regulation of cytoplasmic mRNA decapping; enhances decapping of ARE-containing RNAs, in vitro. Involved in the delivery of target ARE-mRNAs to processing bodies (PBs). In addition to its cytosolic mRNA-decay function, affects nuclear pre-mRNA processing. Negatively regulates nuclear poly(A)-binding protein PABPN1-stimulated polyadenylation activity on ARE-containing pre-mRNA during LPS-stimulated macrophages. Also involved in the regulation of stress granule (SG) and P-body (PB) formation and fusion. Plays a role in the regulation of keratinocyte proliferation, differentiation and apoptosis. Plays a role as a tumor suppressor by inhibiting cell proliferation in breast cancer cells. Its function is as follows. (Microbial infection) Negatively regulates HTLV-1 TAX-dependent transactivation of viral long terminal repeat (LTR) promoter. The chain is mRNA decay activator protein ZFP36 from Homo sapiens (Human).